A 113-amino-acid chain; its full sequence is Teretoxin Tan14.1 (113 aa).

An N-terminal signal peptide occupies residues 1-21 (MALEAQMTLRMFVLVAMASTV). Positions 22–86 (HVLSSSFSED…DETSSRTGKR (65 aa)) are excised as a propeptide.

Belongs to the teretoxin N (TN) superfamily. Contains 2 disulfide bonds. As to expression, expressed by the venom duct.

It is found in the secreted. This Terebra anilis (Auger snail) protein is Teretoxin Tan14.1.